Reading from the N-terminus, the 456-residue chain is MAAFARMVKGQVRSYSAPVDMAIPASKRKFIPSSGSYPKGFVVSGTHVGVKASNTKFPDLALISSETPCSAAAVFTTNKFQAAPVQVSRDIIKTRQGQGIRSVVINSGCANAVTGKGGLEDAVSMGKKVDECDGLNEPSTLVMSTGVIGQRLPISKILKKVPVAHANLSSTHDAWLTTARAICTTDTFPKLLSRTFTLPSSPGRTYSLAGMTKGAGMIHPNMATLLGVLCTDAPIEPSALQSLLKHSVNRSFNSISVDGDTSTNDTIAILANGAAGGAPISSSSSDDYAAMQDILTSFAQSLSQLVVRDGEGATKFVTVRVQNSPDYESGRLIASTIARSPLVKTALYGKDANWGRILCAIGYTQGVAPGTVVPEHTSVSFKPVDGSPVLNLLVNGEPEQVDEERASVILQEEDLEIVVDLGGGEKGEQGLGGEEAVYWFCDFSHEYVTINGDYRT.

Substrate contacts are provided by T184, K213, T224, E311, N451, and T456. Catalysis depends on T224, which acts as the Nucleophile.

This sequence belongs to the ArgJ family. Heterodimer of an alpha and a beta chain. In terms of processing, the alpha and beta chains are autoproteolytically processed from a single precursor protein within the mitochondrion.

It localises to the mitochondrion matrix. It carries out the reaction N(2)-acetyl-L-ornithine + L-glutamate = N-acetyl-L-glutamate + L-ornithine. It catalyses the reaction L-glutamate + acetyl-CoA = N-acetyl-L-glutamate + CoA + H(+). It functions in the pathway amino-acid biosynthesis; L-arginine biosynthesis; L-ornithine and N-acetyl-L-glutamate from L-glutamate and N(2)-acetyl-L-ornithine (cyclic): step 1/1. Its pathway is amino-acid biosynthesis; L-arginine biosynthesis; N(2)-acetyl-L-ornithine from L-glutamate: step 1/4. Its function is as follows. Catalyzes two activities which are involved in the cyclic version of arginine biosynthesis: the synthesis of acetylglutamate from glutamate and acetyl-CoA, and of ornithine by transacetylation between acetylornithine and glutamate. The polypeptide is Arginine biosynthesis bifunctional protein ArgJ, mitochondrial (Aspergillus oryzae (strain ATCC 42149 / RIB 40) (Yellow koji mold)).